Reading from the N-terminus, the 235-residue chain is Repeat element protein (235 aa).

Residues 57–235 (IFQELLERLS…ARRKKCRFSQ (179 aa)) form a repeat element region.

The chain is Repeat element protein from Campoletis sonorensis (CsIV).